The chain runs to 110 residues: Putative membrane protein insertion efficiency factor (110 aa).

It belongs to the UPF0161 family.

It is found in the cell inner membrane. Its function is as follows. Could be involved in insertion of integral membrane proteins into the membrane. This Aliarcobacter butzleri (strain RM4018) (Arcobacter butzleri) protein is Putative membrane protein insertion efficiency factor.